A 125-amino-acid polypeptide reads, in one-letter code: Profilin-A (125 aa).

Ser2 carries the N-acetylserine modification.

Belongs to the profilin family. Occurs in many kinds of cells as a complex with monomeric actin in a 1:1 ratio.

The protein resides in the cytoplasm. It localises to the cytoskeleton. Its function is as follows. Binds to actin and affects the structure of the cytoskeleton. At high concentrations, profilin prevents the polymerization of actin, whereas it enhances it at low concentrations. By binding to PIP2, it inhibits the formation of IP3 and DG. This chain is Profilin-A (PROA), found in Physarum polycephalum (Slime mold).